Reading from the N-terminus, the 123-residue chain is uncharacterized protein (123 aa).

Residues 17–74 form a disordered region; sequence FQKKKKTGSQTRRTLKPQPQQLQQNLPKGHETTGHTYERVLQQQGSQERSPGLMSEDS. A Phosphothreonine modification is found at T30. Residues 32 to 43 show a composition bias toward low complexity; sequence KPQPQQLQQNLP. Residues 44–54 are compositionally biased toward basic and acidic residues; that stretch reads KGHETTGHTYE. S62 is subject to Phosphoserine.

This is an uncharacterized protein from Homo sapiens (Human).